The following is a 227-amino-acid chain: 7-cyano-7-deazaguanine synthase (227 aa).

7–17 (VSGGMDSLVAT) lines the ATP pocket. Residues Cys-187, Cys-195, Cys-198, and Cys-201 each contribute to the Zn(2+) site.

Belongs to the QueC family. Requires Zn(2+) as cofactor.

The catalysed reaction is 7-carboxy-7-deazaguanine + NH4(+) + ATP = 7-cyano-7-deazaguanine + ADP + phosphate + H2O + H(+). It functions in the pathway purine metabolism; 7-cyano-7-deazaguanine biosynthesis. Catalyzes the ATP-dependent conversion of 7-carboxy-7-deazaguanine (CDG) to 7-cyano-7-deazaguanine (preQ(0)). This Chlorobaculum tepidum (strain ATCC 49652 / DSM 12025 / NBRC 103806 / TLS) (Chlorobium tepidum) protein is 7-cyano-7-deazaguanine synthase.